Consider the following 470-residue polypeptide: MTTLLKKEYNDVSYISGPLLFVNAASDLAYGAIVEIKDGTGRTRGGQVISVSDENAVIQVFEETRGLDLATASVSLVEDVARLGVSREMIGRRFDGLGRPIDGLPPVVAEKRLNINGEPMNPAARAKPEEFIQTGISTIDVNTSLIRGQKLPIFSGSGLPHNELAAQIARQAKVPGHEGDFAVVFAAMGLTQREVSFFTQEFERTGALARSVLFLNRADDPAVERLLTPRMALTTAEYLAFEHGYHVLVILTDMTNYCEALREIGGAREEIPGRRGFPGYMYTDLASLYERAGVVQGKPGSVTQIPILSMPDDDITHPIPDLTGYITEGQIVVDRGLNAKGIFPPINPLPSLSRLQGNGIGKGKTRADHKNVSDQLFAAYANGLDLRKLVAITGEDALTETDKLYLRFADDFEAYFIGQGDQDRSVEDSLTVAWAILSKLPQSQLTRLSKDAIDKYYGAKLDEMWRGNRI.

This sequence belongs to the ATPase alpha/beta chains family.

Functionally, produces ATP from ADP in the presence of a proton gradient across the membrane. The V-type beta chain is a regulatory subunit. In Deinococcus geothermalis (strain DSM 11300 / CIP 105573 / AG-3a), this protein is V-type ATP synthase beta chain.